A 145-amino-acid chain; its full sequence is Nickel-responsive regulator (145 aa).

Ni(2+)-binding residues include His77, His88, His90, and Cys96.

It belongs to the transcriptional regulatory CopG/NikR family. As to quaternary structure, homotetramer. Ni(2+) is required as a cofactor.

Its function is as follows. Transcriptional repressor of the nikABCDE operon. Is active in the presence of excessive concentrations of intracellular nickel. The sequence is that of Nickel-responsive regulator from Edwardsiella ictaluri (strain 93-146).